We begin with the raw amino-acid sequence, 392 residues long: Phosphoglycerate kinase (392 aa).

Residues 21–23, R36, 59–62, R113, and R146 each bind substrate; these read DLN and HLGR. Residues K197, E319, and 345–348 each bind ATP; that span reads GGDT.

The protein belongs to the phosphoglycerate kinase family. As to quaternary structure, monomer.

It localises to the cytoplasm. The catalysed reaction is (2R)-3-phosphoglycerate + ATP = (2R)-3-phospho-glyceroyl phosphate + ADP. It participates in carbohydrate degradation; glycolysis; pyruvate from D-glyceraldehyde 3-phosphate: step 2/5. This is Phosphoglycerate kinase from Thioalkalivibrio sulfidiphilus (strain HL-EbGR7).